A 288-amino-acid polypeptide reads, in one-letter code: Light-independent protochlorophyllide reductase iron-sulfur ATP-binding protein (288 aa).

Residues 10–15 and Lys-39 each bind ATP; that span reads GIGKST. Residue Ser-14 participates in Mg(2+) binding. Positions 95 and 129 each coordinate [4Fe-4S] cluster. ATP is bound at residue 180-181; sequence NR.

It belongs to the NifH/BchL/ChlL family. In terms of assembly, homodimer. Protochlorophyllide reductase is composed of three subunits; ChlL, ChlN and ChlB. It depends on [4Fe-4S] cluster as a cofactor.

It catalyses the reaction chlorophyllide a + oxidized 2[4Fe-4S]-[ferredoxin] + 2 ADP + 2 phosphate = protochlorophyllide a + reduced 2[4Fe-4S]-[ferredoxin] + 2 ATP + 2 H2O. It participates in porphyrin-containing compound metabolism; chlorophyll biosynthesis (light-independent). Its function is as follows. Component of the dark-operative protochlorophyllide reductase (DPOR) that uses Mg-ATP and reduced ferredoxin to reduce ring D of protochlorophyllide (Pchlide) to form chlorophyllide a (Chlide). This reaction is light-independent. The L component serves as a unique electron donor to the NB-component of the complex, and binds Mg-ATP. The polypeptide is Light-independent protochlorophyllide reductase iron-sulfur ATP-binding protein (Nostoc punctiforme (strain ATCC 29133 / PCC 73102)).